A 110-amino-acid polypeptide reads, in one-letter code: Endoribonuclease SymE (110 aa).

The SpoVT-AbrB domain occupies 29–74; that stretch reads SRYPEYTRIPAITLKGQWLEDAGFTTGTQVDVRVMNGCIVLTAQQP.

Belongs to the SymE family.

It is found in the cytoplasm. Involved in the degradation and recycling of damaged RNA. It is itself a target for degradation by the ATP-dependent protease Lon. This chain is Endoribonuclease SymE, found in Salmonella paratyphi C (strain RKS4594).